Consider the following 252-residue polypeptide: Indole-3-glycerol phosphate synthase (252 aa).

This sequence belongs to the TrpC family.

The catalysed reaction is 1-(2-carboxyphenylamino)-1-deoxy-D-ribulose 5-phosphate + H(+) = (1S,2R)-1-C-(indol-3-yl)glycerol 3-phosphate + CO2 + H2O. The protein operates within amino-acid biosynthesis; L-tryptophan biosynthesis; L-tryptophan from chorismate: step 4/5. The polypeptide is Indole-3-glycerol phosphate synthase (Listeria welshimeri serovar 6b (strain ATCC 35897 / DSM 20650 / CCUG 15529 / CIP 8149 / NCTC 11857 / SLCC 5334 / V8)).